Reading from the N-terminus, the 578-residue chain is Arginine--tRNA ligase (578 aa).

Positions 127–137 (PNLAKEMHVGH) match the 'HIGH' region motif.

This sequence belongs to the class-I aminoacyl-tRNA synthetase family. As to quaternary structure, monomer.

The protein localises to the cytoplasm. The catalysed reaction is tRNA(Arg) + L-arginine + ATP = L-arginyl-tRNA(Arg) + AMP + diphosphate. This is Arginine--tRNA ligase from Pseudomonas putida (strain ATCC 47054 / DSM 6125 / CFBP 8728 / NCIMB 11950 / KT2440).